Reading from the N-terminus, the 76-residue chain is cAMP-dependent protein kinase inhibitor alpha (76 aa).

N-acetylthreonine is present on Thr2. The interval 49 to 76 (KTEGEEDAQRSSTEQSGEAQGEAAKSES) is disordered.

Belongs to the PKI family.

In terms of biological role, extremely potent competitive inhibitor of cAMP-dependent protein kinase activity, this protein interacts with the catalytic subunit of the enzyme after the cAMP-induced dissociation of its regulatory chains. The chain is cAMP-dependent protein kinase inhibitor alpha (PKIA) from Homo sapiens (Human).